A 479-amino-acid polypeptide reads, in one-letter code: GDP-fucose protein O-fucosyltransferase 3 (479 aa).

At 1–8 the chain is on the cytoplasmic side; sequence MVRIQRRK. The helical; Signal-anchor for type II membrane protein transmembrane segment at 9 to 31 threads the bilayer; that stretch reads LLASCLCVTATVFLLVTLQVMVE. At 32–479 the chain is on the lumenal side; the sequence is LGKFERKEFK…QEFWGLVFKD (448 aa). 2 N-linked (GlcNAc...) asparagine glycosylation sites follow: N110 and N168. Cysteines 389 and 392 form a disulfide.

The protein belongs to the glycosyltransferase 10 family. In terms of tissue distribution, expressed in lung, digestive tract, gall bladder, placenta, kidney, uterus and brain. Not detected in spleen, heart, muscle, liver and pancreas.

It localises to the endoplasmic reticulum membrane. It is found in the golgi apparatus membrane. The protein resides in the golgi apparatus. The protein localises to the lysosome. The enzyme catalyses L-threonyl-[protein] + GDP-beta-L-fucose = 3-O-(alpha-L-fucosyl)-L-threonyl-[protein] + GDP + H(+). The catalysed reaction is L-seryl-[protein] + GDP-beta-L-fucose = 3-O-(alpha-L-fucosyl)-L-seryl-[protein] + GDP + H(+). It participates in protein modification; protein glycosylation. Its function is as follows. Protein O-fucosyltransferase that specifically catalyzes O-fucosylation of serine or threonine residues in EMI domains of target proteins, such as MMRN1, MMRN2 and EMID1. Attaches fucose through an O-glycosidic linkage. O-fucosylation of EMI domain-containing proteins may be required for facilitating protein folding and secretion. May also show alpha-(1,3)-fucosyltransferase activity toward the innermost N-acetyl glucosamine (GlcNAc) residue in biantennary N-glycan acceptors. However, this was tested with a library of synthetic substrates and this activity is unsure in vivo. May be involved in biosynthesis of Lewis X-carrying biantennary N-glycans that regulate neuron stem cell self-renewal during brain development. In Homo sapiens (Human), this protein is GDP-fucose protein O-fucosyltransferase 3.